The primary structure comprises 80 residues: Defensin-like protein 13 (80 aa).

The first 29 residues, 1-29 (MAKSATIVTLFFAALVFFAALEAPMVVEA), serve as a signal peptide directing secretion. The residue at position 30 (Gln-30) is a Pyrrolidone carboxylic acid. 4 cysteine pairs are disulfide-bonded: Cys-33-Cys-80, Cys-44-Cys-65, Cys-50-Cys-74, and Cys-54-Cys-76.

This sequence belongs to the DEFL family. As to quaternary structure, forms oligomers in its native state. Expressed predominantly in siliques and dry seeds.

The protein localises to the secreted. Confers broad-spectrum resistance to pathogens. Possesses antifungal activity sensitive to inorganic cations in vitro. The chain is Defensin-like protein 13 (PDF1.1) from Arabidopsis thaliana (Mouse-ear cress).